We begin with the raw amino-acid sequence, 320 residues long: V-set and transmembrane domain-containing protein 4 (320 aa).

The signal sequence occupies residues 1 to 23 (MRLLALAAAALLARAPAPEVCAA). Residues 24 to 155 (LNVTVSPGPV…SSATEMRVIS (132 aa)) form the Ig-like domain. The Extracellular portion of the chain corresponds to 24 to 180 (LNVTVSPGPV…WAFFEDLYVY (157 aa)). 4 N-linked (GlcNAc...) asparagine glycosylation sites follow: N25, N41, N89, and N144. Residues C46 and C127 are joined by a disulfide bond. A helical membrane pass occupies residues 181 to 201 (AVLVCCVGILSILLFMLVIVW). Residues 202-320 (QSVFNKRKSR…AQILFEENKL (119 aa)) are Cytoplasmic-facing.

In terms of processing, proteolytically cleaved to generate a bioactive peptide.

It localises to the secreted. It is found in the cell membrane. In terms of biological role, peptide Lv enhances L-type voltage-gated calcium channel (L-VGCC) currents in retinal photoreceptors. The chain is V-set and transmembrane domain-containing protein 4 (VSTM4) from Homo sapiens (Human).